The chain runs to 735 residues: Mitochondrial potassium channel ATP-binding subunit (735 aa).

The transit peptide at 1–25 directs the protein to the mitochondrion; it reads MLVHLFRVGIRGGPFPGRLLPPLRF. The Mitochondrial matrix segment spans residues 26 to 144; sequence QTFSAVRNTW…KLFWQFLHPH (119 aa). Residues 145–165 form a helical membrane-spanning segment; it reads LLVLGVAVVLALGAALVNVQI. The region spanning 150 to 437 is the ABC transmembrane type-1 domain; it reads VAVVLALGAA…LSVLFGQVVR (288 aa). Residues 166–195 lie on the Mitochondrial intermembrane side of the membrane; sequence PLLLGQLVEVVAKYTRDHVGSFMTESQNLS. The helical transmembrane segment at 196–216 threads the bilayer; that stretch reads THLLILYGVQGLLTFGYLVLL. At 217–295 the chain is on the mitochondrial matrix side; that stretch reads SHVGERMAVD…SLSMLSTRLT (79 aa). Residues 296–316 traverse the membrane as a helical segment; sequence LLLMVATPALMGVGTLMGSGL. Topologically, residues 317–735 are mitochondrial intermembrane; that stretch reads RKLSRQCQEQ…EGPRSHQHKS (419 aa). Residues 472 to 709 form the ABC transporter domain; that stretch reads VTFQNVCFSY…GGLYAELIRR (238 aa). Residue 507–514 participates in ATP binding; the sequence is GQSGGGKT. Positions 712–735 are disordered; sequence LDAPRTAAPPPKKPEGPRSHQHKS.

The protein belongs to the ABC transporter superfamily. ABCB family. Multidrug resistance exporter (TC 3.A.1.201) subfamily. As to quaternary structure, the mitochondrial potassium channel (mitoK(ATP)) is composed of 4 subunits of CCDC51/MITOK and 4 subunits of ABCB8/MITOSUR. Interacts with C10orf88/PAAT. Interacts with NRP1; NRP1 regulates ABCB8/MITOSUR protein levels in mitochondria. As to expression, ubiquitous.

It localises to the mitochondrion inner membrane. Its activity is regulated as follows. Channel activity inhibited by ATP via ABCB8/MITOSUR subunit. Its function is as follows. ATP-binding subunit of the mitochondrial ATP-gated potassium channel (mitoK(ATP)). Together with pore-forming subunit CCDC51/MITOK of the mitoK(ATP) channel, mediates ATP-dependent potassium currents across the mitochondrial inner membrane. An increase in ATP intracellular levels closes the channel, inhibiting K(+) transport, whereas a decrease in ATP levels enhances K(+) uptake in the mitochondrial matrix. Plays a role in mitochondrial iron transport. Required for maintenance of normal cardiac function, possibly by influencing mitochondrial iron export and regulating the maturation of cytosolic iron sulfur cluster-containing enzymes. The polypeptide is Mitochondrial potassium channel ATP-binding subunit (Homo sapiens (Human)).